The chain runs to 358 residues: GDSL esterase/lipase At2g30220 (358 aa).

The N-terminal stretch at 1–22 (MYISKTIVFGLFVATLLVSCNA) is a signal peptide. A glycan (N-linked (GlcNAc...) asparagine) is linked at asparagine 25. Serine 40 acts as the Nucleophile in catalysis. N-linked (GlcNAc...) asparagine glycosylation is found at asparagine 102 and asparagine 324. Catalysis depends on residues aspartate 332 and histidine 335.

This sequence belongs to the 'GDSL' lipolytic enzyme family.

It is found in the secreted. In Arabidopsis thaliana (Mouse-ear cress), this protein is GDSL esterase/lipase At2g30220.